Reading from the N-terminus, the 140-residue chain is Sex-regulated protein janus-B (140 aa).

Residue Arg42 participates in substrate binding. The Proton acceptor role is filled by His69. A substrate-binding site is contributed by 110 to 112 (SRT).

The protein belongs to the janus family.

Its function is as follows. JanA and janB regulate somatic sex differentiation. The sequence is that of Sex-regulated protein janus-B (janB) from Drosophila erecta (Fruit fly).